The sequence spans 117 residues: Large ribosomal subunit protein uL22 (117 aa).

This sequence belongs to the universal ribosomal protein uL22 family. In terms of assembly, part of the 50S ribosomal subunit.

Its function is as follows. This protein binds specifically to 23S rRNA; its binding is stimulated by other ribosomal proteins, e.g. L4, L17, and L20. It is important during the early stages of 50S assembly. It makes multiple contacts with different domains of the 23S rRNA in the assembled 50S subunit and ribosome. In terms of biological role, the globular domain of the protein is located near the polypeptide exit tunnel on the outside of the subunit, while an extended beta-hairpin is found that lines the wall of the exit tunnel in the center of the 70S ribosome. In Lactobacillus gasseri (strain ATCC 33323 / DSM 20243 / BCRC 14619 / CIP 102991 / JCM 1131 / KCTC 3163 / NCIMB 11718 / NCTC 13722 / AM63), this protein is Large ribosomal subunit protein uL22.